Reading from the N-terminus, the 66-residue chain is Large ribosomal subunit protein uL29 (66 aa).

The protein belongs to the universal ribosomal protein uL29 family.

This chain is Large ribosomal subunit protein uL29, found in Bacillus mycoides (strain KBAB4) (Bacillus weihenstephanensis).